The following is a 428-amino-acid chain: Light-independent protochlorophyllide reductase subunit N (428 aa).

3 residues coordinate [4Fe-4S] cluster: Cys-31, Cys-56, and Cys-117.

It belongs to the BchN/ChlN family. As to quaternary structure, protochlorophyllide reductase is composed of three subunits; BchL, BchN and BchB. Forms a heterotetramer of two BchB and two BchN subunits. The cofactor is [4Fe-4S] cluster.

The catalysed reaction is chlorophyllide a + oxidized 2[4Fe-4S]-[ferredoxin] + 2 ADP + 2 phosphate = protochlorophyllide a + reduced 2[4Fe-4S]-[ferredoxin] + 2 ATP + 2 H2O. The protein operates within porphyrin-containing compound metabolism; bacteriochlorophyll biosynthesis (light-independent). In terms of biological role, component of the dark-operative protochlorophyllide reductase (DPOR) that uses Mg-ATP and reduced ferredoxin to reduce ring D of protochlorophyllide (Pchlide) to form chlorophyllide a (Chlide). This reaction is light-independent. The NB-protein (BchN-BchB) is the catalytic component of the complex. This chain is Light-independent protochlorophyllide reductase subunit N, found in Rhodopseudomonas palustris (strain HaA2).